The chain runs to 721 residues: Polyribonucleotide nucleotidyltransferase (721 aa).

Mg(2+)-binding residues include D486 and D492. The KH domain occupies 553 to 612; sequence PKIVQLQIDIDKISLVIGSTGKTVKAITDEFEVKVQIEQNGKIILFGDDDFKMQKAKERI. The S1 motif domain maps to 622 to 716; sequence GEIYEGIVKK…KFGKIDLEVV (95 aa).

The protein belongs to the polyribonucleotide nucleotidyltransferase family. It depends on Mg(2+) as a cofactor.

It localises to the cytoplasm. It carries out the reaction RNA(n+1) + phosphate = RNA(n) + a ribonucleoside 5'-diphosphate. Involved in mRNA degradation. Catalyzes the phosphorolysis of single-stranded polyribonucleotides processively in the 3'- to 5'-direction. This chain is Polyribonucleotide nucleotidyltransferase, found in Borrelia garinii subsp. bavariensis (strain ATCC BAA-2496 / DSM 23469 / PBi) (Borreliella bavariensis).